We begin with the raw amino-acid sequence, 418 residues long: MIISKDRKLVVGLEIGTTKVVTLVGEVLIDDNIKIIGFGTCLSKGIDKGKINNLDLIVSCIQESINKAEIMADCQITSVYLSLSNKYINCQNEIGIIPISDDEVTKEDIEHVIHIAQSVQILNEHHILHVIPQEYSIDQQYGIKNPIGLSGVRMQVKVHLITCHQNMARNIIKAVEKCDVKVDQVIFSGLASSKAVLTEDECNLGVCMIDIGGGTIDFTIYIDGSIKYSQVIPYAGNIVTSDISYAFSTSRDNAENIKIKYGSVKKPPLGSSKNIDFSDINCNFQQNLQQDALIDVIESRYVELLSLVQDQIVHLQKKLHKKGEKYELLSGIVLTGGGSNISCLTDCAEKVFQKKVRVAKPFNISGLIEKITEPCYSTVIGLLHYGKESYINIDKKKKEHSFFEIIFKRINNWFKKEF.

Belongs to the FtsA/MreB family. As to quaternary structure, self-interacts. Interacts with FtsZ.

The protein resides in the cell inner membrane. Cell division protein that is involved in the assembly of the Z ring. May serve as a membrane anchor for the Z ring. This Buchnera aphidicola subsp. Acyrthosiphon pisum (strain APS) (Acyrthosiphon pisum symbiotic bacterium) protein is Cell division protein FtsA.